The sequence spans 352 residues: Staphylococcal superantigen-like 3 (352 aa).

The first 30 residues, 1–30 (MKMRTIAKTSLALGLLTTGAITVTTQSVKA), serve as a signal peptide directing secretion. A disordered region spans residues 61 to 165 (ATTQAANTRQ…TIKQAQTDMT (105 aa)). Residues 69–104 (RQERTPKLEKAPNTNEEKTSASKIEKISQPKQEEQK) are compositionally biased toward basic and acidic residues. The span at 114–141 (PKQEQSQTTTESTTPKTKVTTPPSTNTP) shows a compositional bias: low complexity. The segment covering 142–164 (QPMQSTKSDTPQSPTIKQAQTDM) has biased composition (polar residues). Residues 228–326 (IDVFIVLEDN…VIKMKNGGKY (99 aa)) form a sialyl Lewis X-binding region.

Belongs to the staphylococcal/streptococcal toxin family. Interacts with host TLR2 (via its extracellular domain).

It localises to the secreted. Its function is as follows. Secreted protein that plays an essential role in immune innate response inhibition by interacting with and inhibiting host TLR2. In turn, bacteria recognition by immune cells is impaired and cytokine production is inhibited. Mechanistically, by interacting with TLR2, blocks ligand binding and thus inhibits activation. Second, by interacting with an already formed TLR2-lipopeptide complex, prevents TLR heterodimerization and downstream signaling. The interaction with host TLR2 does not involve sialyl Lewis X interactions. This is Staphylococcal superantigen-like 3 from Staphylococcus aureus (strain Newman).